Here is a 570-residue protein sequence, read N- to C-terminus: Serine/threonine-protein kinase STY17 (570 aa).

The disordered stretch occupies residues 112–145 (LNGNSGDVDPSDPAVNEDAQSSYNSRSLAPPTFG). Residues 129–145 (DAQSSYNSRSLAPPTFG) show a composition bias toward polar residues. Residues 180-260 (EITFSTIDRP…PCSKQKSITF (81 aa)) form the ACT domain. Residues 292–545 (LKIEKKVACG…EIIEMLNQLI (254 aa)) enclose the Protein kinase domain. Residues 298–306 (VACGSYGEL) and Lys-319 contribute to the ATP site. The active-site Proton acceptor is Asp-413. The residue at position 441 (Ser-441) is a Phosphoserine. Thr-445 carries the phosphothreonine modification.

This sequence belongs to the protein kinase superfamily. Ser/Thr protein kinase family. In terms of processing, autophosphorylated on serine and threonine residues. Autophosphorylated at Thr-445.

The protein localises to the cytoplasm. Its subcellular location is the cytosol. The enzyme catalyses L-seryl-[protein] + ATP = O-phospho-L-seryl-[protein] + ADP + H(+). It carries out the reaction L-threonyl-[protein] + ATP = O-phospho-L-threonyl-[protein] + ADP + H(+). Activated by autophosphorylation at Thr-445. Its function is as follows. Serine/threonine protein kinase that specifically phosphorylates chloroplast precursor proteins in the cytosol within the cleavable presequences (transit peptides). May be part of a cytosolic regulatory network involved in chloroplast protein import. Does not phosphorylate mitochondrion precursor proteins. Specific for ATP and does not utilize other NTPs. Plays a role in chloroplast biogenesis and differentiation in cotyledons, possibly through phosphorylation of chloroplast preproteins. This is Serine/threonine-protein kinase STY17 from Arabidopsis thaliana (Mouse-ear cress).